A 197-amino-acid polypeptide reads, in one-letter code: dITP/XTP pyrophosphatase (197 aa).

8 to 13 is a substrate binding site; it reads TGNAGK. Positions 40 and 69 each coordinate Mg(2+). Catalysis depends on Asp-69, which acts as the Proton acceptor. Residues Ser-70, 154–157, Lys-177, and 182–183 each bind substrate; these read FGYD and HR.

Belongs to the HAM1 NTPase family. Homodimer. Requires Mg(2+) as cofactor.

The catalysed reaction is XTP + H2O = XMP + diphosphate + H(+). It catalyses the reaction dITP + H2O = dIMP + diphosphate + H(+). The enzyme catalyses ITP + H2O = IMP + diphosphate + H(+). In terms of biological role, pyrophosphatase that catalyzes the hydrolysis of nucleoside triphosphates to their monophosphate derivatives, with a high preference for the non-canonical purine nucleotides XTP (xanthosine triphosphate), dITP (deoxyinosine triphosphate) and ITP. Seems to function as a house-cleaning enzyme that removes non-canonical purine nucleotides from the nucleotide pool, thus preventing their incorporation into DNA/RNA and avoiding chromosomal lesions. This Salmonella typhi protein is dITP/XTP pyrophosphatase (rdgB).